The primary structure comprises 428 residues: D-amino acid dehydrogenase (428 aa).

V3 to Y17 serves as a coordination point for FAD.

The protein belongs to the DadA oxidoreductase family. FAD is required as a cofactor.

The catalysed reaction is a D-alpha-amino acid + A + H2O = a 2-oxocarboxylate + AH2 + NH4(+). It functions in the pathway amino-acid degradation; D-alanine degradation; NH(3) and pyruvate from D-alanine: step 1/1. Functionally, oxidative deamination of D-amino acids. This Paraburkholderia phymatum (strain DSM 17167 / CIP 108236 / LMG 21445 / STM815) (Burkholderia phymatum) protein is D-amino acid dehydrogenase.